The chain runs to 147 residues: Protein phosphatase 1 regulatory subunit 14B (147 aa).

Over residues 1-15 (MADSGPAGGAALAAP) the composition is skewed to low complexity. A disordered region spans residues 1 to 55 (MADSGPAGGAALAAPAPGPGSGGAGPRVYFQSPPGAAGEGPGGADDEGPVRRQGK). Alanine 2 carries the N-acetylalanine modification. Serine 21 bears the Phosphoserine mark. Phosphotyrosine is present on tyrosine 29. A Phosphoserine modification is found at serine 32. At threonine 57 the chain carries Phosphothreonine. A coiled-coil region spans residues 61–103 (DRKELRKRLNLEEWILEQLTRLYDCQEEEIPELEIDVDELLDM).

This sequence belongs to the PP1 inhibitor family. In terms of processing, phosphorylated primarily on Thr-57 by PKC (in vitro). An unknown Ser is also phosphorylated by PKC (in vitro).

Its subcellular location is the cytoplasm. Its function is as follows. Inhibitor of PPP1CA. Has over 50-fold higher inhibitory activity when phosphorylated. This Sus scrofa (Pig) protein is Protein phosphatase 1 regulatory subunit 14B (PPP1R14B).